We begin with the raw amino-acid sequence, 53 residues long: Metallothionein (53 aa).

The propeptide occupies 1–6 (MRVIRM). 9 residues coordinate Cu(+): Cys-17, His-19, Cys-22, Cys-24, Cys-32, His-33, Cys-34, Cys-43, and Cys-45.

This sequence belongs to the metallothionein superfamily.

Its function is as follows. Metallothioneins are small proteins that have a high content of cysteine residues which allow them to bind heavy metal ions through clusters of thiolate bonds. MymT binds up to seven ions of Cu(+), with a preference for four to six Cu(+) ions, in a solvent-shielded core. MymT protects M.tuberculosis from copper toxicity. This is Metallothionein (mymT) from Mycobacterium tuberculosis (strain CDC 1551 / Oshkosh).